The sequence spans 428 residues: D-amino acid dehydrogenase (428 aa).

3–17 contributes to the FAD binding site; that stretch reads VVILGSGVVGVASAY.

Belongs to the DadA oxidoreductase family. FAD is required as a cofactor.

It carries out the reaction a D-alpha-amino acid + A + H2O = a 2-oxocarboxylate + AH2 + NH4(+). The protein operates within amino-acid degradation; D-alanine degradation; NH(3) and pyruvate from D-alanine: step 1/1. Functionally, oxidative deamination of D-amino acids. The chain is D-amino acid dehydrogenase from Burkholderia cenocepacia (strain ATCC BAA-245 / DSM 16553 / LMG 16656 / NCTC 13227 / J2315 / CF5610) (Burkholderia cepacia (strain J2315)).